The sequence spans 413 residues: 2,3-bisphosphoglycerate-independent phosphoglycerate mutase (413 aa).

This sequence belongs to the BPG-independent phosphoglycerate mutase family. A-PGAM subfamily.

It carries out the reaction (2R)-2-phosphoglycerate = (2R)-3-phosphoglycerate. It participates in carbohydrate degradation; glycolysis; pyruvate from D-glyceraldehyde 3-phosphate: step 3/5. In terms of biological role, catalyzes the interconversion of 2-phosphoglycerate and 3-phosphoglycerate. The polypeptide is 2,3-bisphosphoglycerate-independent phosphoglycerate mutase (Sulfurisphaera tokodaii (strain DSM 16993 / JCM 10545 / NBRC 100140 / 7) (Sulfolobus tokodaii)).